Consider the following 543-residue polypeptide: MSFRAVITSSEHQAVWSRLILTLSTINQDIKFTIMSNELILWSMNSTDTTMYQVRLKASFFSEFSFDPGNIVFGEEGLQVIEDLQKQQHTLYSFVINGRHLSILSRKPEYDNIKEFSLSIDNSTAAPEAIINRLHIRVYTESLITKEFSPAFNPVKYDPIVIDLKYKKKFLDVYGTEESVNGEQADPRLLDFFRQVRKQLEEAKFNEGIIDAPRPAELRSEHEINFLSMDSLIWRNAIDLCTNNTEELKLDLTMNKMVITAFTKGVQNMKSSDVLKQAISISNSVSTEDVEHYCLFTTSGNPGMSKKDADSKQAVFKLRDFRNFFSANQAWKENATVNCWFCSPGDPILFEIDRGHVKLSLVQITDTAGKAVGAAPDLAIHPVLVSPRKPVSPLRAACTNTNAASNALHGVQLDAANMDAIKTLFVQDVEIGVSAAAMAHSPANRCTDENLRSMCSISQQGQHSCDGSPATNLRRVSRAGTTIAWGAGKDHVMCPDSDYGVAQDVNQLKRRKVGELAHASQSPESQDYGLGPTQQYQPKGIFD.

Residues 512–543 (KVGELAHASQSPESQDYGLGPTQQYQPKGIFD) form a disordered region.

It belongs to the DDC1 family. Component of the checkpoint clamp complex composed of DDC1, MEC3 and RAD17.

Its subcellular location is the cytoplasm. The protein localises to the nucleus. Its function is as follows. Component of the checkpoint clamp complex involved in the surveillance mechanism that allows the DNA repair pathways to act to restore the integrity of the DNA prior to DNA synthesis or separation of the replicated chromosomes. This is DNA damage checkpoint protein 1 (DDC1) from Eremothecium gossypii (strain ATCC 10895 / CBS 109.51 / FGSC 9923 / NRRL Y-1056) (Yeast).